We begin with the raw amino-acid sequence, 179 residues long: Large ribosomal subunit protein uL6 (179 aa).

Belongs to the universal ribosomal protein uL6 family. Part of the 50S ribosomal subunit.

In terms of biological role, this protein binds to the 23S rRNA, and is important in its secondary structure. It is located near the subunit interface in the base of the L7/L12 stalk, and near the tRNA binding site of the peptidyltransferase center. The chain is Large ribosomal subunit protein uL6 from Persephonella marina (strain DSM 14350 / EX-H1).